The sequence spans 806 residues: Hyperosmolality-gated Ca2+ permeable channel 1.8 (806 aa).

Helical transmembrane passes span Ile7–Val27, Ile102–Val122, Lys157–Tyr177, Leu375–Val395, Phe427–Met447, Tyr467–Glu487, Ala512–Leu532, Phe576–Phe596, Val626–Ala646, and Ala650–Tyr670. Residues Ser726–Ser786 form a disordered region. Residues Ser731–Thr750 show a composition bias toward basic and acidic residues. Thr735 bears the Phosphothreonine mark. A compositionally biased stretch (polar residues) spans Gln751 to Ser762. Low complexity predominate over residues Ser775–Ser786.

The protein belongs to the CSC1 (TC 1.A.17) family.

Its subcellular location is the golgi apparatus membrane. It is found in the cell membrane. Functionally, acts as an osmosensitive calcium-permeable cation channel. The sequence is that of Hyperosmolality-gated Ca2+ permeable channel 1.8 from Arabidopsis thaliana (Mouse-ear cress).